The chain runs to 407 residues: Protein S-acyltransferase 8 (407 aa).

2 helical membrane-spanning segments follow: residues 29–49 and 62–82; these read SLPL…VFVA and GYAI…LLFF. The DHHC domain occupies 136 to 186; the sequence is KYCDTCMLYRPPRCSHCSICNNCVERFDHHCPWVGQCIGLRNYRYFFMFVS. Catalysis depends on cysteine 166, which acts as the S-palmitoyl cysteine intermediate. 2 helical membrane passes run 181–201 and 224–244; these read FFMF…MSAV and AVVL…LTAF. Positions 348–368 are disordered; sequence AEDANNNQPHHTLDIDHERAG. A compositionally biased stretch (basic and acidic residues) spans 358-368; that stretch reads HTLDIDHERAG. A Phosphoserine modification is found at serine 385.

It belongs to the DHHC palmitoyltransferase family. In terms of tissue distribution, expressed in flowers and pollen.

Its subcellular location is the cell membrane. It catalyses the reaction L-cysteinyl-[protein] + hexadecanoyl-CoA = S-hexadecanoyl-L-cysteinyl-[protein] + CoA. In terms of biological role, S-acyltransferase involved in protein lipid modification. The polypeptide is Protein S-acyltransferase 8 (PAT08) (Arabidopsis thaliana (Mouse-ear cress)).